A 1347-amino-acid polypeptide reads, in one-letter code: Spermatogenesis-associated protein 31A7 (1347 aa).

Residues 23-43 (PWVLDIFLTLVFALGFFFLLL) traverse the membrane as a helical segment. Disordered stretches follow at residues 55 to 88 (PSPS…RECP), 106 to 233 (GPHL…RDST), 374 to 397 (QDTT…GPQK), 628 to 658 (DESP…EAQK), 900 to 955 (RGIP…REAV), 1084 to 1161 (VHEE…PSVS), and 1313 to 1335 (KAVS…SHHH). A compositionally biased stretch (basic residues) spans 60–82 (GKRKCPVGRRRRPRGRMKNHSLR). Residues 165 to 178 (LASTPSPGPMTTSV) show a composition bias toward polar residues. Positions 198–211 (PEPPALFPHPPHTP) are enriched in pro residues. Composition is skewed to polar residues over residues 631-651 (PGTS…STGE) and 927-948 (LTYS…SSKA). Composition is skewed to basic and acidic residues over residues 1108-1127 (HKSE…RLEG) and 1137-1146 (RKTEDTHQDE).

The protein belongs to the SPATA31 family.

Its subcellular location is the membrane. Its function is as follows. May play a role in spermatogenesis. The protein is Spermatogenesis-associated protein 31A7 of Homo sapiens (Human).